Reading from the N-terminus, the 582-residue chain is Formate--tetrahydrofolate ligase (582 aa).

65-72 (TPLGEGKT) serves as a coordination point for ATP.

This sequence belongs to the formate--tetrahydrofolate ligase family.

The enzyme catalyses (6S)-5,6,7,8-tetrahydrofolate + formate + ATP = (6R)-10-formyltetrahydrofolate + ADP + phosphate. Its pathway is one-carbon metabolism; tetrahydrofolate interconversion. This Aliivibrio fischeri (strain ATCC 700601 / ES114) (Vibrio fischeri) protein is Formate--tetrahydrofolate ligase.